Consider the following 508-residue polypeptide: Drug efflux pump JefA (508 aa).

14 helical membrane-spanning segments follow: residues 9 to 29 (VLATGLGIFMVFVDVNIVNVA), 46 to 66 (WAVAGYSLGMAAVLMSCALLG), 75 to 95 (FVFGVTLFVVSSIVCVLPVSL), 104 to 124 (IQGLGAAFISVLSLALLSHSF), 136 to 156 (NWMAIGMVGAASAPALGGLMV), 163 to 183 (SVFLVNVPLGAIVWLLTLVGV), 194 to 214 (LDWVGQLTLIPAVALIAYTII), 222 to 242 (QSAGFVAALLLAAGVLLWLFV), 265 to 285 (SVLIVYFVVMSCFFGTLMVIT), 297 to 317 (LHAGLMMLPVPAGFGVASLLA), 328 to 348 (LPVLTCLAAMFIGLAIFAISM), 354 to 374 (VALVGLTIFGAGAGGCATPLL), 399 to 419 (LGGIFGVAFLGTIVAAWLGAA), and 479 to 499 (GIKLALGGAAVLLTGAFVLGW).

It belongs to the major facilitator superfamily.

The protein resides in the cell inner membrane. Functionally, involved in resistance to ethambutol and isoniazid. In Mycobacterium tuberculosis (strain CDC 1551 / Oshkosh), this protein is Drug efflux pump JefA.